Consider the following 204-residue polypeptide: N-(5'-phosphoribosyl)anthranilate isomerase (204 aa).

It belongs to the TrpF family.

It catalyses the reaction N-(5-phospho-beta-D-ribosyl)anthranilate = 1-(2-carboxyphenylamino)-1-deoxy-D-ribulose 5-phosphate. The protein operates within amino-acid biosynthesis; L-tryptophan biosynthesis; L-tryptophan from chorismate: step 3/5. This Bacillus mycoides (strain KBAB4) (Bacillus weihenstephanensis) protein is N-(5'-phosphoribosyl)anthranilate isomerase.